Consider the following 209-residue polypeptide: Large ribosomal subunit protein uL4 (209 aa).

The interval 45-77 (RQGTHKAKERAEVTGSTRKIKKQKGTGTARAGS) is disordered.

Belongs to the universal ribosomal protein uL4 family. As to quaternary structure, part of the 50S ribosomal subunit.

Its function is as follows. One of the primary rRNA binding proteins, this protein initially binds near the 5'-end of the 23S rRNA. It is important during the early stages of 50S assembly. It makes multiple contacts with different domains of the 23S rRNA in the assembled 50S subunit and ribosome. In terms of biological role, forms part of the polypeptide exit tunnel. This chain is Large ribosomal subunit protein uL4, found in Flavobacterium johnsoniae (strain ATCC 17061 / DSM 2064 / JCM 8514 / BCRC 14874 / CCUG 350202 / NBRC 14942 / NCIMB 11054 / UW101) (Cytophaga johnsonae).